Here is a 262-residue protein sequence, read N- to C-terminus: Thiazole synthase (262 aa).

Lys104 serves as the catalytic Schiff-base intermediate with DXP. Residues Gly165, 191–192, and 213–214 contribute to the 1-deoxy-D-xylulose 5-phosphate site; these read AG and NT.

The protein belongs to the ThiG family. As to quaternary structure, homotetramer. Forms heterodimers with either ThiH or ThiS.

Its subcellular location is the cytoplasm. It carries out the reaction [ThiS sulfur-carrier protein]-C-terminal-Gly-aminoethanethioate + 2-iminoacetate + 1-deoxy-D-xylulose 5-phosphate = [ThiS sulfur-carrier protein]-C-terminal Gly-Gly + 2-[(2R,5Z)-2-carboxy-4-methylthiazol-5(2H)-ylidene]ethyl phosphate + 2 H2O + H(+). The protein operates within cofactor biosynthesis; thiamine diphosphate biosynthesis. Functionally, catalyzes the rearrangement of 1-deoxy-D-xylulose 5-phosphate (DXP) to produce the thiazole phosphate moiety of thiamine. Sulfur is provided by the thiocarboxylate moiety of the carrier protein ThiS. In vitro, sulfur can be provided by H(2)S. This chain is Thiazole synthase, found in Alkalilimnicola ehrlichii (strain ATCC BAA-1101 / DSM 17681 / MLHE-1).